The primary structure comprises 341 residues: Ribosomal RNA small subunit methyltransferase C (341 aa).

It belongs to the methyltransferase superfamily. RsmC family. Monomer.

It is found in the cytoplasm. The catalysed reaction is guanosine(1207) in 16S rRNA + S-adenosyl-L-methionine = N(2)-methylguanosine(1207) in 16S rRNA + S-adenosyl-L-homocysteine + H(+). In terms of biological role, specifically methylates the guanine in position 1207 of 16S rRNA in the 30S particle. The polypeptide is Ribosomal RNA small subunit methyltransferase C (Shewanella halifaxensis (strain HAW-EB4)).